The chain runs to 505 residues: 4-trimethylaminobutyraldehyde dehydrogenase (505 aa).

NAD(+)-binding positions include lysine 191 and 243-247 (GSVPT). The active-site Proton acceptor is the glutamate 265. Cysteine 299 serves as the catalytic Nucleophile. Glutamate 402 lines the NAD(+) pocket.

This sequence belongs to the aldehyde dehydrogenase family. Homotetramer. Constitutively expressed in all organs tested: brain, eye, gill, GI, heart, liver, kidney, muscle, skin, testis and ovary.

It localises to the cytoplasm. Its subcellular location is the cytosol. The catalysed reaction is 4-(trimethylamino)butanal + NAD(+) + H2O = 4-(trimethylamino)butanoate + NADH + 2 H(+). It catalyses the reaction an aldehyde + NAD(+) + H2O = a carboxylate + NADH + 2 H(+). Its pathway is amine and polyamine biosynthesis; carnitine biosynthesis. In terms of biological role, converts gamma-trimethylaminobutyraldehyde into gamma-butyrobetaine with high efficiency (in vitro). Can catalyze the irreversible oxidation of a broad range of aldehydes to the corresponding acids in an NAD-dependent reaction, but with low efficiency. The sequence is that of 4-trimethylaminobutyraldehyde dehydrogenase (aldh9A1) from Oryzias latipes (Japanese rice fish).